We begin with the raw amino-acid sequence, 355 residues long: Ribosomal RNA large subunit methyltransferase M (355 aa).

S-adenosyl-L-methionine-binding positions include Ser-183, 216–219, Asp-235, Asp-255, and Asp-271; that span reads SPGG. Residue Lys-300 is the Proton acceptor of the active site.

This sequence belongs to the class I-like SAM-binding methyltransferase superfamily. RNA methyltransferase RlmE family. RlmM subfamily. As to quaternary structure, monomer.

The protein localises to the cytoplasm. It carries out the reaction cytidine(2498) in 23S rRNA + S-adenosyl-L-methionine = 2'-O-methylcytidine(2498) in 23S rRNA + S-adenosyl-L-homocysteine + H(+). Its function is as follows. Catalyzes the 2'-O-methylation at nucleotide C2498 in 23S rRNA. The polypeptide is Ribosomal RNA large subunit methyltransferase M (Pseudomonas putida (strain W619)).